The chain runs to 339 residues: MKDVLTKLANANHLRFEEMQQAARELFAEDVTDSEIAAFLIALKAKGETAEELAGLASIMREVAVDIPVSGTDFIDNCGTGGDGSQSFNISTTAAFVLAGAGAKVAKHGNRSVSSKTGSADVLESLGVPLDVSTEEIATLLETNGIAFLFAQRMHPRVKQIMKVRRDLRIPTIFNLIGPLTNPVPLKTQLLGIYREDLLETIALTLHRLGRKRAIVLHGACGMDEASLAGTNQLVLLDQGELIRFSLHPEEVGLSVAPIEAIRGGTAAENAEILLRVLRGEAGPYRDTVLLNAGIALFAEGRVETIREGIERSAESIDSGRALEKLQYLQRMKQQEAIG.

5-phospho-alpha-D-ribose 1-diphosphate is bound by residues G79, 82–83 (GD), S87, 89–92 (NIST), 107–115 (KHGNRSVSS), and S119. Residue G79 coordinates anthranilate. Residue S91 participates in Mg(2+) binding. N110 is an anthranilate binding site. R165 contacts anthranilate. Mg(2+)-binding residues include D224 and E225.

The protein belongs to the anthranilate phosphoribosyltransferase family. In terms of assembly, homodimer. The cofactor is Mg(2+).

It carries out the reaction N-(5-phospho-beta-D-ribosyl)anthranilate + diphosphate = 5-phospho-alpha-D-ribose 1-diphosphate + anthranilate. The protein operates within amino-acid biosynthesis; L-tryptophan biosynthesis; L-tryptophan from chorismate: step 2/5. Functionally, catalyzes the transfer of the phosphoribosyl group of 5-phosphorylribose-1-pyrophosphate (PRPP) to anthranilate to yield N-(5'-phosphoribosyl)-anthranilate (PRA). The chain is Anthranilate phosphoribosyltransferase from Exiguobacterium sibiricum (strain DSM 17290 / CCUG 55495 / CIP 109462 / JCM 13490 / 255-15).